Consider the following 105-residue polypeptide: MANLQQQKIRIRLKAFDHRLLDTSCEKIVDTAKRTSASAVGPIPLPTRRRIYCVLRSPHVDKDSREHFETRTHRRIIDIYQPSPKTIDALMKLDLPAGVDIEVKL.

It belongs to the universal ribosomal protein uS10 family. Part of the 30S ribosomal subunit.

Its function is as follows. Involved in the binding of tRNA to the ribosomes. This is Small ribosomal subunit protein uS10 from Cyanothece sp. (strain PCC 7425 / ATCC 29141).